The chain runs to 339 residues: Photosystem II assembly lipoprotein Ycf48 (339 aa).

The N-terminal stretch at 1 to 22 (MVIVKSWQKIFALLVVLLLCIG) is a signal peptide. A lipid anchor (N-palmitoyl cysteine) is attached at Cys23. A lipid anchor (S-diacylglycerol cysteine) is attached at Cys23.

It belongs to the Ycf48 family. Part of early PSII assembly complexes which includes D1 (psbA) and PsbI; not found in mature PSII. Binds to the lumenal side of PSII complexes. Interacts with YidC.

It localises to the cellular thylakoid membrane. In terms of biological role, a factor required for optimal assembly of photosystem II (PSII), acting in the early stages of PSII assembly. Also plays a role in replacement of photodamaged D1 (psbA). Assists YidC in synthesis of chlorophyll-binding proteins. The protein is Photosystem II assembly lipoprotein Ycf48 of Trichormus variabilis (strain ATCC 29413 / PCC 7937) (Anabaena variabilis).